The chain runs to 398 residues: MLTLPNERGRFGMFGGKFVPETLMRPLADIERQLYEALADPSFHAEYMHHLYEYSGRPTALTFAKNLTERLGGAKMYFKREDLNHTGAHKINNAIGQALLAKRMGKRKIIAETGAGQHGVAAATVAARFGMECKVFMGEEDVKRQSLNVFRMKLLGAEVIPVTSGNRTLKDATNEAIRYWVEHCDDHFYMIGSVVGPHPYPMMVREFQRIIGEEAREQMLKAEGKLPNTIIACVGGGSNAIGMFHPFLDDDVECIGVEAAGKGVHTTEHAATITKGTKGVIHGSLTYVLQDEHGQIVEPYSISAGLDYPGVGPEHAYLAHIGRVRYESVTDEEAIAALQMTAETEGIIPAIESAHALAKAFQIAPLRSKHETILVCLSGRGDKDVQTVMNYLEGDERK.

Position 90 is an N6-(pyridoxal phosphate)lysine (lysine 90).

The protein belongs to the TrpB family. Tetramer of two alpha and two beta chains. The cofactor is pyridoxal 5'-phosphate.

It carries out the reaction (1S,2R)-1-C-(indol-3-yl)glycerol 3-phosphate + L-serine = D-glyceraldehyde 3-phosphate + L-tryptophan + H2O. The protein operates within amino-acid biosynthesis; L-tryptophan biosynthesis; L-tryptophan from chorismate: step 5/5. In terms of biological role, the beta subunit is responsible for the synthesis of L-tryptophan from indole and L-serine. The polypeptide is Tryptophan synthase beta chain (Anoxybacillus flavithermus (strain DSM 21510 / WK1)).